Consider the following 232-residue polypeptide: Phosphatidylserine decarboxylase proenzyme (232 aa).

Serine 201 functions as the Schiff-base intermediate with substrate; via pyruvic acid in the catalytic mechanism. Serine 201 is modified (pyruvic acid (Ser); by autocatalysis).

It belongs to the phosphatidylserine decarboxylase family. PSD-A subfamily. In terms of assembly, heterodimer of a large membrane-associated beta subunit and a small pyruvoyl-containing alpha subunit. The cofactor is pyruvate. Is synthesized initially as an inactive proenzyme. Formation of the active enzyme involves a self-maturation process in which the active site pyruvoyl group is generated from an internal serine residue via an autocatalytic post-translational modification. Two non-identical subunits are generated from the proenzyme in this reaction, and the pyruvate is formed at the N-terminus of the alpha chain, which is derived from the carboxyl end of the proenzyme. The post-translation cleavage follows an unusual pathway, termed non-hydrolytic serinolysis, in which the side chain hydroxyl group of the serine supplies its oxygen atom to form the C-terminus of the beta chain, while the remainder of the serine residue undergoes an oxidative deamination to produce ammonia and the pyruvoyl prosthetic group on the alpha chain.

It localises to the cell membrane. The catalysed reaction is a 1,2-diacyl-sn-glycero-3-phospho-L-serine + H(+) = a 1,2-diacyl-sn-glycero-3-phosphoethanolamine + CO2. It functions in the pathway phospholipid metabolism; phosphatidylethanolamine biosynthesis; phosphatidylethanolamine from CDP-diacylglycerol: step 2/2. In terms of biological role, catalyzes the formation of phosphatidylethanolamine (PtdEtn) from phosphatidylserine (PtdSer). This Mycolicibacterium smegmatis (strain ATCC 700084 / mc(2)155) (Mycobacterium smegmatis) protein is Phosphatidylserine decarboxylase proenzyme.